The following is a 32-amino-acid chain: Cytochrome b6-f complex subunit 7 (32 aa).

The helical transmembrane segment at 9–27 (AAVFWVLIPVGLAGGALLL) threads the bilayer.

This sequence belongs to the PetM family. In terms of assembly, the 4 large subunits of the cytochrome b6-f complex are cytochrome b6, subunit IV (17 kDa polypeptide, PetD), cytochrome f and the Rieske protein, while the 4 small subunits are PetG, PetL, PetM and PetN. The complex functions as a dimer.

The protein localises to the cellular thylakoid membrane. Functionally, component of the cytochrome b6-f complex, which mediates electron transfer between photosystem II (PSII) and photosystem I (PSI), cyclic electron flow around PSI, and state transitions. The chain is Cytochrome b6-f complex subunit 7 from Prochlorococcus marinus (strain MIT 9303).